Consider the following 229-residue polypeptide: DNA mismatch repair protein MutH (229 aa).

This sequence belongs to the MutH family.

It localises to the cytoplasm. Its function is as follows. Sequence-specific endonuclease that cleaves unmethylated GATC sequences. It is involved in DNA mismatch repair. This is DNA mismatch repair protein MutH from Shigella flexneri.